Reading from the N-terminus, the 79-residue chain is MSRLRNSAQLQLSKKESLGDNGGALNTTRSSRQKQGKYGFTRKCGRLVKEQRARFYIMRRCVVMLICWTDHNNNNSDHS.

Residues 1–12 are compositionally biased toward polar residues; the sequence is MSRLRNSAQLQL. Positions 1–37 are disordered; sequence MSRLRNSAQLQLSKKESLGDNGGALNTTRSSRQKQGK. N-linked (GlcNAc...) asparagine glycosylation is present at Asn26. The tract at residues 39–70 is required for DVL/RTFL small polypeptide activity; it reads GFTRKCGRLVKEQRARFYIMRRCVVMLICWTD. Residues 55 to 71 traverse the membrane as a helical segment; the sequence is FYIMRRCVVMLICWTDH. An N-linked (GlcNAc...) asparagine glycan is attached at Asn74.

It belongs to the DVL/RTFL small polypeptides family.

It is found in the cell membrane. In terms of biological role, small polypeptide acting as a regulatory molecule which coordinates cellular responses required for differentiation, growth and development, probably by restricting polar cell proliferation in lateral organs and coordinating socket cell recruitment and differentiation at trichome sites. The chain is Small polypeptide DEVIL 8 from Arabidopsis thaliana (Mouse-ear cress).